The primary structure comprises 443 residues: Probable D-serine dehydratase (443 aa).

Residue Lys118 is modified to N6-(pyridoxal phosphate)lysine.

The protein belongs to the serine/threonine dehydratase family. DsdA subfamily. It depends on pyridoxal 5'-phosphate as a cofactor.

The enzyme catalyses D-serine = pyruvate + NH4(+). The protein is Probable D-serine dehydratase of Colwellia psychrerythraea (strain 34H / ATCC BAA-681) (Vibrio psychroerythus).